A 478-amino-acid chain; its full sequence is 3-isopropylmalate dehydratase large subunit (478 aa).

[4Fe-4S] cluster contacts are provided by C347, C407, and C410.

It belongs to the aconitase/IPM isomerase family. LeuC type 1 subfamily. As to quaternary structure, heterodimer of LeuC and LeuD. [4Fe-4S] cluster is required as a cofactor.

The enzyme catalyses (2R,3S)-3-isopropylmalate = (2S)-2-isopropylmalate. The protein operates within amino-acid biosynthesis; L-leucine biosynthesis; L-leucine from 3-methyl-2-oxobutanoate: step 2/4. Catalyzes the isomerization between 2-isopropylmalate and 3-isopropylmalate, via the formation of 2-isopropylmaleate. This chain is 3-isopropylmalate dehydratase large subunit, found in Prochlorococcus marinus (strain MIT 9303).